Consider the following 728-residue polypeptide: Catalase-peroxidase (728 aa).

A signal peptide spans 1-16 (MDNPTDSAGKCPVAHG). A disordered region spans residues 1–26 (MDNPTDSAGKCPVAHGNTPRSRSNRD). Positions 96–218 (WHSAGTYRIT…LGAVQMGFIY (123 aa)) form a cross-link, tryptophyl-tyrosyl-methioninium (Trp-Tyr) (with M-244). The Proton acceptor role is filled by His-97. Positions 218 to 244 (YVNPEGPNGNSDPLASARDIRETFARM) form a cross-link, tryptophyl-tyrosyl-methioninium (Tyr-Met) (with W-96). His-259 contributes to the heme b binding site.

The protein belongs to the peroxidase family. Peroxidase/catalase subfamily. Homodimer or homotetramer. Heme b serves as cofactor. In terms of processing, formation of the three residue Trp-Tyr-Met cross-link is important for the catalase, but not the peroxidase activity of the enzyme.

It carries out the reaction H2O2 + AH2 = A + 2 H2O. It catalyses the reaction 2 H2O2 = O2 + 2 H2O. Its function is as follows. Bifunctional enzyme with both catalase and broad-spectrum peroxidase activity. The sequence is that of Catalase-peroxidase from Rhizobium leguminosarum bv. phaseoli.